The chain runs to 471 residues: 5-hydroxytryptamine receptor 2A (471 aa).

Residues 1-80 (MDILCEENTS…LQEKNWSALL (80 aa)) lie on the Extracellular side of the membrane. Residues Asn8, Asn38, Asn44, Asn51, and Asn54 are each glycosylated (N-linked (GlcNAc...) asparagine). Residues 81–97 (TAVVIILTIAGNILVIM) traverse the membrane as a helical segment. Residues 98–111 (AVSLEKKLQNATNY) lie on the Cytoplasmic side of the membrane. A helical membrane pass occupies residues 112–137 (FLMSLAIADMLLGFLVMPVSMLTILY). The Extracellular segment spans residues 138–146 (GYRWPLPSK). The chain crosses the membrane as a helical span at residues 147–171 (LCAVWIYLDVLFSTASIMHLCAISL). Cysteines 148 and 227 form a disulfide. Residue Asp155 participates in serotonin binding. Residues 172-174 (DRY) carry the DRY motif; important for ligand-induced conformation changes motif. Topologically, residues 172-191 (DRYVAIQNPIHHSRFNSRTK) are cytoplasmic. Residues 192 to 215 (AFLKIIAVWTISVGISMPIPVFGL) traverse the membrane as a helical segment. Residues 216–232 (QDDSKVFKEGSCLLADD) are Extracellular-facing. A helical membrane pass occupies residues 233-258 (NFVLIGSFVSFFIPLTIMVITYFLTI). The Cytoplasmic portion of the chain corresponds to 259–322 (KSLQKEATLC…QSISNEQKAC (64 aa)). Ser280 bears the Phosphoserine mark. Residues 323 to 348 (KVLGIVFFLFVVMWCPFFITNIMAVI) traverse the membrane as a helical segment. Asn343 contacts serotonin. Cys349 and Cys353 are disulfide-bonded. Residues 349 to 356 (CKESCNED) lie on the Extracellular side of the membrane. The helical transmembrane segment at 357–382 (VIGALLNVFVWIGYLSSAVNPLVYTL) threads the bilayer. The short motif at 376–380 (NPLVY) is the NPxxY motif; important for ligand-induced conformation changes and signaling element. Residues 383-471 (FNKTYRSAFS…DGVNEKVSCV (89 aa)) are Cytoplasmic-facing. The segment at 450–471 (KQHSEDASKDNSDGVNEKVSCV) is disordered. A compositionally biased stretch (basic and acidic residues) spans 451-465 (QHSEDASKDNSDGVN). Positions 469–471 (SCV) match the PDZ-binding motif.

It belongs to the G-protein coupled receptor 1 family. Interacts (via C-terminus) with MPDZ and PATJ. May interact (via C-terminus) with MPP3, PRDX6, DLG4, DLG1, CASK, APBA1 and MAGI2. Interacts with GRM2 and DRD2; this may affect signaling.

It is found in the cell membrane. Its subcellular location is the cell projection. It localises to the dendrite. The protein localises to the axon. The protein resides in the cytoplasmic vesicle. It is found in the membrane. Its subcellular location is the caveola. It localises to the presynapse. G-protein coupled receptor activity is regulated by lipids: oleamide increases HTR2A-mediated activity. Functionally, G-protein coupled receptor for 5-hydroxytryptamine (serotonin). Also functions as a receptor for various drugs and psychoactive substances, including mescaline, psilocybin, 1-(2,5-dimethoxy-4-iodophenyl)-2-aminopropane (DOI) and lysergic acid diethylamide (LSD). Ligand binding causes a conformation change that triggers signaling via guanine nucleotide-binding proteins (G proteins) and modulates the activity of downstream effectors. HTR2A is coupled to G(q)/G(11) G alpha proteins and activates phospholipase C-beta, releasing diacylglycerol (DAG) and inositol 1,4,5-trisphosphate (IP3) second messengers that modulate the activity of phosphatidylinositol 3-kinase and promote the release of Ca(2+) ions from intracellular stores, respectively. Beta-arrestin family members inhibit signaling via G proteins and mediate activation of alternative signaling pathways. Affects neural activity, perception, cognition and mood. Plays a role in the regulation of behavior, including responses to anxiogenic situations and psychoactive substances. Plays a role in intestinal smooth muscle contraction, and may play a role in arterial vasoconstriction. The polypeptide is 5-hydroxytryptamine receptor 2A (HTR2A) (Macaca mulatta (Rhesus macaque)).